The sequence spans 541 residues: Effector protein hopAB1 (541 aa).

Disordered regions lie at residues 1 to 94 (MPGI…EAQQ), 168 to 222 (QRAL…RHPQ), and 317 to 338 (RQTT…SGRR). Residues 18–31 (TDGEPVTEREHDSS) show a composition bias toward basic and acidic residues. Over residues 183 to 196 (SSSGSSQRSLIGRS) the composition is skewed to low complexity.

Belongs to the HopAB family.

Its subcellular location is the secreted. Its function is as follows. Effector protein that plays different roles depending on the species and plant cultivars that interact with the pathogen. Acts as a virulence determinant by enhancing the development of disease symptoms and bacterial growth. Acts as an avirulence factor by eliciting hypersensitive response (HR) and plant resistance. The protein is Effector protein hopAB1 (hopAB1) of Pseudomonas savastanoi (Pseudomonas syringae pv. savastanoi).